The primary structure comprises 1227 residues: Splicing factor 3B subunit 3 (1227 aa).

The protein belongs to the RSE1 family. As to quaternary structure, identified in the spliceosome A complex; remains associated with the spliceosome throughout the splicing process. Component of the spliceosome B complex. Identified in the spliceosome C complex. Identified in the spliceosome E complex. Component of the U11/U12 snRNPs that are part of the U12-type spliceosome. Component of splicing factor SF3B complex. Identified in the SAGA transcription regulatory histone acetylation (HAT) complex; the interaction is RNA-independent.

The protein resides in the nucleus. Its function is as follows. Involved in pre-mRNA splicing as a component of the splicing factor SF3B complex, a constituent of the spliceosome. SF3B complex is required for 'A' complex assembly formed by the stable binding of U2 snRNP to the branchpoint sequence (BPS) in pre-mRNA. Sequence independent binding of SF3A/SF3B complex upstream of the branch site is essential, it may anchor U2 snRNP to the pre-mRNA. May also be involved in the assembly of the 'E' complex. Also belongs to the minor U12-dependent spliceosome, which is involved in the splicing of rare class of nuclear pre-mRNA intron. This Drosophila melanogaster (Fruit fly) protein is Splicing factor 3B subunit 3.